A 422-amino-acid chain; its full sequence is L-2-hydroxyglutarate dehydrogenase (422 aa).

It belongs to the L2HGDH family. FAD is required as a cofactor.

It localises to the cell inner membrane. It catalyses the reaction (S)-2-hydroxyglutarate + a quinone = a quinol + 2-oxoglutarate. Its pathway is amino-acid degradation. Catalyzes the dehydrogenation of L-2-hydroxyglutarate (L2HG) to alpha-ketoglutarate and couples to the respiratory chain by feeding electrons from the reaction into the membrane quinone pool. Functions in a L-lysine degradation pathway that proceeds via cadaverine, glutarate and L-2-hydroxyglutarate. Also displays some oxidase activity in vitro on L-2-hydroxyglutarate with O2 as the electron acceptor, but this activity is most likely not physiological. The protein is L-2-hydroxyglutarate dehydrogenase of Salmonella houtenae.